The following is a 354-amino-acid chain: Protein RecA (354 aa).

Residue 67 to 74 (GPESSGKT) participates in ATP binding. Residues 331-354 (GGANSSDSKTESDENIDLETGEVF) form a disordered region. The span at 343–354 (DENIDLETGEVF) shows a compositional bias: acidic residues.

Belongs to the RecA family.

It localises to the cytoplasm. Can catalyze the hydrolysis of ATP in the presence of single-stranded DNA, the ATP-dependent uptake of single-stranded DNA by duplex DNA, and the ATP-dependent hybridization of homologous single-stranded DNAs. It interacts with LexA causing its activation and leading to its autocatalytic cleavage. In Shewanella frigidimarina (strain NCIMB 400), this protein is Protein RecA.